The sequence spans 462 residues: Amino-acid permease AapA (462 aa).

Helical transmembrane passes span 27–47 (LMAIGGAIGTGLFLGSGKSIH), 48–68 (FAGPSILFAYLITGVFCFFIM), 96–116 (AAFITGWTYWFCWISLAMADL), 134–154 (LPGLLALIILLIMNLATVKLF), 160–180 (WFALIKVIAILALIVTGILLI), 209–229 (GFILSFQMVVFAFVGIELVGL), 252–272 (ILLFYVGALFVIMCIYPWNVL), 279–299 (FVQVFSAVGIVVAASLINFVV), 343–363 (ALFFSSIAILIGVSLNYLMPE), 366–386 (FTLITSVSTICFIFIWGITVI), 410–430 (PLSNYLTLAFLAFILVILALA), and 435–455 (IALFVTPVWFVLLIILYKVQT).

It belongs to the amino acid-polyamine-organocation (APC) superfamily.

Its subcellular location is the cell membrane. Functionally, probable amino-acid or metabolite transport protein. This chain is Amino-acid permease AapA (aapA), found in Bacillus subtilis (strain 168).